The chain runs to 312 residues: Methionyl-tRNA formyltransferase (312 aa).

110–113 (SLLP) is a (6S)-5,6,7,8-tetrahydrofolate binding site.

This sequence belongs to the Fmt family.

The catalysed reaction is L-methionyl-tRNA(fMet) + (6R)-10-formyltetrahydrofolate = N-formyl-L-methionyl-tRNA(fMet) + (6S)-5,6,7,8-tetrahydrofolate + H(+). Its function is as follows. Attaches a formyl group to the free amino group of methionyl-tRNA(fMet). The formyl group appears to play a dual role in the initiator identity of N-formylmethionyl-tRNA by promoting its recognition by IF2 and preventing the misappropriation of this tRNA by the elongation apparatus. The polypeptide is Methionyl-tRNA formyltransferase (Koribacter versatilis (strain Ellin345)).